The sequence spans 404 residues: Cysteine desulfurase IscS (404 aa).

Residues 75-76, Asn-155, Gln-183, and 203-205 contribute to the pyridoxal 5'-phosphate site; these read AT and SGH. Lys-206 bears the N6-(pyridoxal phosphate)lysine mark. Thr-243 contacts pyridoxal 5'-phosphate. Cys-328 (cysteine persulfide intermediate) is an active-site residue. Residue Cys-328 participates in [2Fe-2S] cluster binding.

The protein belongs to the class-V pyridoxal-phosphate-dependent aminotransferase family. NifS/IscS subfamily. In terms of assembly, homodimer. Forms a heterotetramer with IscU, interacts with other sulfur acceptors. Pyridoxal 5'-phosphate is required as a cofactor.

It localises to the cytoplasm. The enzyme catalyses (sulfur carrier)-H + L-cysteine = (sulfur carrier)-SH + L-alanine. Its pathway is cofactor biosynthesis; iron-sulfur cluster biosynthesis. Its function is as follows. Master enzyme that delivers sulfur to a number of partners involved in Fe-S cluster assembly, tRNA modification or cofactor biosynthesis. Catalyzes the removal of elemental sulfur atoms from cysteine to produce alanine. Functions as a sulfur delivery protein for Fe-S cluster synthesis onto IscU, an Fe-S scaffold assembly protein, as well as other S acceptor proteins. The sequence is that of Cysteine desulfurase IscS from Shewanella baltica (strain OS223).